A 925-amino-acid chain; its full sequence is Bifunctional glutamine synthetase adenylyltransferase/adenylyl-removing enzyme (925 aa).

The adenylyl removase stretch occupies residues 1–426 (MTDASDLLSL…AQFDQVFADK (426 aa)). Residues 436–925 (DQAAGCIWSG…AALWARVFGA (490 aa)) form an adenylyl transferase region.

It belongs to the GlnE family. Mg(2+) serves as cofactor.

The catalysed reaction is [glutamine synthetase]-O(4)-(5'-adenylyl)-L-tyrosine + phosphate = [glutamine synthetase]-L-tyrosine + ADP. It carries out the reaction [glutamine synthetase]-L-tyrosine + ATP = [glutamine synthetase]-O(4)-(5'-adenylyl)-L-tyrosine + diphosphate. Functionally, involved in the regulation of glutamine synthetase GlnA, a key enzyme in the process to assimilate ammonia. When cellular nitrogen levels are high, the C-terminal adenylyl transferase (AT) inactivates GlnA by covalent transfer of an adenylyl group from ATP to specific tyrosine residue of GlnA, thus reducing its activity. Conversely, when nitrogen levels are low, the N-terminal adenylyl removase (AR) activates GlnA by removing the adenylyl group by phosphorolysis, increasing its activity. The regulatory region of GlnE binds the signal transduction protein PII (GlnB) which indicates the nitrogen status of the cell. In Burkholderia mallei (strain ATCC 23344), this protein is Bifunctional glutamine synthetase adenylyltransferase/adenylyl-removing enzyme.